We begin with the raw amino-acid sequence, 250 residues long: Small ribosomal subunit protein uS2 (250 aa).

Belongs to the universal ribosomal protein uS2 family.

This is Small ribosomal subunit protein uS2 from Paraburkholderia phytofirmans (strain DSM 17436 / LMG 22146 / PsJN) (Burkholderia phytofirmans).